The primary structure comprises 251 residues: uncharacterized protein (251 aa).

36 to 43 (GKQGTGKT) serves as a coordination point for ATP. The disordered stretch occupies residues 230 to 251 (SDNKTENPSNPSLLTKIDDVTR).

Its function is as follows. This protein may be involved in virus assembly. Essential for virus function. This is an uncharacterized protein from Sulfolobus spindle-shape virus 1 (SSV1).